The chain runs to 478 residues: tRNA(Ile)-lysidine synthase (478 aa).

Residue 27–32 (SGGSDS) coordinates ATP.

Belongs to the tRNA(Ile)-lysidine synthase family.

Its subcellular location is the cytoplasm. It catalyses the reaction cytidine(34) in tRNA(Ile2) + L-lysine + ATP = lysidine(34) in tRNA(Ile2) + AMP + diphosphate + H(+). Functionally, ligates lysine onto the cytidine present at position 34 of the AUA codon-specific tRNA(Ile) that contains the anticodon CAU, in an ATP-dependent manner. Cytidine is converted to lysidine, thus changing the amino acid specificity of the tRNA from methionine to isoleucine. The polypeptide is tRNA(Ile)-lysidine synthase (Rickettsia rickettsii (strain Iowa)).